Reading from the N-terminus, the 111-residue chain is Disintegrin lebein-1-alpha (111 aa).

The first 20 residues, 1–20 (MIQVLLVTICLAVFPYQGSS), serve as a signal peptide directing secretion. The propeptide occupies 21 to 47 (IILESGNVNDYEIVYPKKVTVLPTGAM). The Disintegrin domain maps to 47 to 111 (MNSGNPCCDP…SDCPRNPYKD (65 aa)). 4 disulfide bridges follow: cysteine 53–cysteine 76, cysteine 67–cysteine 73, cysteine 72–cysteine 97, and cysteine 85–cysteine 104. The Cell attachment site signature appears at 89–91 (RGD).

The protein belongs to the disintegrin family. Dimeric disintegrin subfamily. In terms of assembly, heterodimer with subunit beta; disulfide-linked. As to expression, expressed by the venom gland.

The protein localises to the secreted. Functionally, strongly inhibits ADP-induced platelet aggregation on human platelet-rich plasma. Also avidly binds to the laminin-binding beta-1 integrins (alpha-3/beta-1, alpha-6/beta-1, and alpha-7/beta-1) in an RGD-independent manner. This is Disintegrin lebein-1-alpha from Macrovipera lebetinus (Levantine viper).